The following is a 1131-amino-acid chain: Probable chloride channel protein UM03490-D (1131 aa).

12 helical membrane-spanning segments follow: residues 137-157 (GVIV…SLAT), 206-226 (VTVT…PILP), 305-325 (FPAW…CAHL), 341-361 (IKCI…TLAI), 380-397 (GPAV…ASFF), 414-434 (SSAA…LFSL), 485-505 (FEIM…AFVI), 518-538 (YLVK…AFVG), 577-597 (MVNS…VSYG), 603-623 (GIFV…GILV), 643-663 (VPCI…LAGV), and 680-702 (ALTY…DWFS). 2 disordered regions span residues 815–835 (DGVE…LSVA) and 858–928 (ATGA…AGGG). A compositionally biased stretch (low complexity) spans 866 to 877 (GLGSTSATGVAS). The CBS domain occupies 944 to 1000 (IDPTPLIVQPGMPLETVMDMFKNLGPRVILVVEYGRLSGLVTVKDVLKRIAMQEKAE). Positions 1061–1078 (RASASRGGAPGSQAGQAR) are enriched in low complexity. A disordered region spans residues 1061 to 1131 (RASASRGGAP…VLGAQDDDDE (71 aa)). A compositionally biased stretch (polar residues) spans 1104-1113 (STRQTSATKN).

This sequence belongs to the chloride channel (TC 2.A.49) family.

Its subcellular location is the membrane. In terms of biological role, voltage-gated chloride channel. This chain is Probable chloride channel protein UM03490-D, found in Mycosarcoma maydis (Corn smut fungus).